A 109-amino-acid polypeptide reads, in one-letter code: UPF0060 membrane protein mma_0129 (109 aa).

Helical transmembrane passes span 7-27, 31-51, 63-83, and 87-107; these read VALF…PYLW, GASI…VWLL, AAYG…VDGI, and NWDF…LFAP.

It belongs to the UPF0060 family.

The protein resides in the cell inner membrane. The chain is UPF0060 membrane protein mma_0129 from Janthinobacterium sp. (strain Marseille) (Minibacterium massiliensis).